The sequence spans 201 residues: Imidazole glycerol phosphate synthase subunit HisH 1 (201 aa).

The region spanning 1–201 (MIALIDYKAG…LKLLENFARL (201 aa)) is the Glutamine amidotransferase type-1 domain. Catalysis depends on C80, which acts as the Nucleophile. Catalysis depends on residues H183 and E185.

As to quaternary structure, heterodimer of HisH and HisF.

The protein resides in the cytoplasm. The catalysed reaction is 5-[(5-phospho-1-deoxy-D-ribulos-1-ylimino)methylamino]-1-(5-phospho-beta-D-ribosyl)imidazole-4-carboxamide + L-glutamine = D-erythro-1-(imidazol-4-yl)glycerol 3-phosphate + 5-amino-1-(5-phospho-beta-D-ribosyl)imidazole-4-carboxamide + L-glutamate + H(+). The enzyme catalyses L-glutamine + H2O = L-glutamate + NH4(+). It functions in the pathway amino-acid biosynthesis; L-histidine biosynthesis; L-histidine from 5-phospho-alpha-D-ribose 1-diphosphate: step 5/9. In terms of biological role, IGPS catalyzes the conversion of PRFAR and glutamine to IGP, AICAR and glutamate. The HisH subunit provides the glutamine amidotransferase activity that produces the ammonia necessary to HisF for the synthesis of IGP and AICAR. The polypeptide is Imidazole glycerol phosphate synthase subunit HisH 1 (hisH1) (Campylobacter jejuni subsp. jejuni serotype O:23/36 (strain 81-176)).